Reading from the N-terminus, the 250-residue chain is AA9 family lytic polysaccharide monooxygenase E (250 aa).

An N-terminal signal peptide occupies residues 1–21 (MAMSKIMSLTGLLASASLVAG). His22 and His107 together coordinate Cu(2+). Cystine bridges form between Cys77–Cys199 and Cys118–Cys122. Asn159 carries N-linked (GlcNAc...) asparagine glycosylation. Residues His185 and Gln194 each contribute to the O2 site. Tyr196 serves as a coordination point for Cu(2+).

It belongs to the polysaccharide monooxygenase AA9 family. Cu(2+) is required as a cofactor.

It localises to the secreted. The catalysed reaction is [(1-&gt;4)-beta-D-glucosyl]n+m + reduced acceptor + O2 = 4-dehydro-beta-D-glucosyl-[(1-&gt;4)-beta-D-glucosyl]n-1 + [(1-&gt;4)-beta-D-glucosyl]m + acceptor + H2O.. In terms of biological role, lytic polysaccharide monooxygenase (LPMO) that depolymerizes crystalline and amorphous polysaccharides via the oxidation of scissile alpha- or beta-(1-4)-glycosidic bonds, yielding C1 or C4 oxidation products. Catalysis by LPMOs requires the reduction of the active-site copper from Cu(II) to Cu(I) by a reducing agent and H(2)O(2) or O(2) as a cosubstrate. In Aspergillus tamarii, this protein is AA9 family lytic polysaccharide monooxygenase E.